The following is a 510-amino-acid chain: DNA nucleotidylexotransferase (510 aa).

Positions methionine 1–proline 22 are disordered. The Nuclear localization signal motif lies at proline 11 to arginine 17. A BRCT domain is found at proline 27–glutamine 124. Position 134 is a phosphoserine (serine 134). The mediates interaction with DNTTIP2 stretch occupies residues serine 151–alanine 510. Residues valine 258–threonine 262 form an involved in DNA binding region. A 2'-deoxyribonucleoside 5'-triphosphate-binding positions include glycine 333 to lysine 338 and histidine 342 to aspartate 345. Residues aspartate 343, aspartate 345, and aspartate 434 each contribute to the Mg(2+) site. Glycine 449–tryptophan 450 lines the a 2'-deoxyribonucleoside 5'-triphosphate pocket.

This sequence belongs to the DNA polymerase type-X family. As to quaternary structure, interacts with PRP19 and DNTTIP1. Forms a ternary complex with DNTTIP2 and core histone. Released from this complex by PCNA. Interacts with TRERF1. Mg(2+) serves as cofactor. In terms of tissue distribution, isoform TDT-L: Expressed in the thymus, and, at lower levels, in the bone marrow. Detected in both cycling and noncycling pro-B and pre-B cells (at protein level). Isoform TDT-S: Expressed in both cycling and noncycling pro-B, but not pre-B, cells (at protein level). Not detected in mature peripheral or germinal center B cells.

The protein resides in the nucleus. It is found in the cytoplasm. It carries out the reaction DNA(n) + a 2'-deoxyribonucleoside 5'-triphosphate = DNA(n+1) + diphosphate. Transferase that catalyzes the nontemplated addition of nucleoside triphosphate to coding ends during V(D)J recombination (N addition). Involved in the generation of diversity in the antigen-binding region of immunoglobulin heavy and light chains and T-cell receptors during B- and T-cell development. Does not act on double-stranded DNA with blunt ends. Its function is as follows. 3'-to-5' DNA exonuclease. Involved in the generation of diversity in the antigen-binding region of immunoglobulin heavy and light chains and T-cell receptors during B- and T-cell development. Acts on single-stranded and double-stranded DNA with 3' or 5' extensions, but not on double-stranded DNA with blunt ends. Attenuates not only isoform TDT-S-catalyzed N addition, but also P (palindromic) addition in coding joins. Lacks terminal transferase activity. The protein is DNA nucleotidylexotransferase (Dntt) of Mus musculus (Mouse).